Consider the following 618-residue polypeptide: Transcriptional regulator CPUR_05421 (618 aa).

Positions 14–41 (CSHLVGREIGCSRDLAGCRRCTSEGRAC) form a DNA-binding region, zn(2)-C6 fungal-type. Residues 52–87 (TRRRNRANQDVTRSALYSSNTTPQTISDQATGRPCE) form a disordered region. The span at 59 to 81 (NQDVTRSALYSSNTTPQTISDQA) shows a compositional bias: polar residues.

It localises to the nucleus. Transcriptional regulator; part of the ergochrome gene cluster responsible for the typical purple-black color of the ergot sclerotia. The ergochrome gene cluster produces several ergot pigments including the yellow ergochrome secalonic acid and its derivatives, as well as the red anthraquinones endocrocin and clavorubin. The polypeptide is Transcriptional regulator CPUR_05421 (Claviceps purpurea (strain 20.1) (Ergot fungus)).